Here is a 141-residue protein sequence, read N- to C-terminus: MAKKVVGQIKLQIPAGKATPAPPVGPALGQHGVNIMGFCKEFNAKTADQAGMIIPVIISVYQDRSYTFITKTPPAAILIKKAAGIDKASGEPHTKKVATISKAKVKEIAELKMPDLNASSVESAMSMIAGTARSMGVVVED.

It belongs to the universal ribosomal protein uL11 family. Part of the ribosomal stalk of the 50S ribosomal subunit. Interacts with L10 and the large rRNA to form the base of the stalk. L10 forms an elongated spine to which L12 dimers bind in a sequential fashion forming a multimeric L10(L12)X complex. Post-translationally, one or more lysine residues are methylated.

Functionally, forms part of the ribosomal stalk which helps the ribosome interact with GTP-bound translation factors. This is Large ribosomal subunit protein uL11 from Alkaliphilus metalliredigens (strain QYMF).